The sequence spans 171 residues: Large ribosomal subunit protein bL9 (171 aa).

Belongs to the bacterial ribosomal protein bL9 family.

In terms of biological role, binds to the 23S rRNA. This is Large ribosomal subunit protein bL9 from Rickettsia africae (strain ESF-5).